We begin with the raw amino-acid sequence, 101 residues long: Small ribosomal subunit protein uS14 (101 aa).

Belongs to the universal ribosomal protein uS14 family. In terms of assembly, part of the 30S ribosomal subunit. Contacts proteins S3 and S10.

Functionally, binds 16S rRNA, required for the assembly of 30S particles and may also be responsible for determining the conformation of the 16S rRNA at the A site. The sequence is that of Small ribosomal subunit protein uS14 from Blochmanniella floridana.